A 234-amino-acid chain; its full sequence is Cyclo(L-leucyl-L-leucyl) synthase (234 aa).

S33 acts as the Nucleophile in catalysis. Residues N36, 179 to 183 (YIFAE), Y203, and 208 to 209 (SI) contribute to the substrate site.

Belongs to the CDPS family.

The enzyme catalyses 2 L-leucyl-tRNA(Leu) = cyclo(L-leucyl-L-leucyl) + 2 tRNA(Leu) + 2 H(+). Functionally, it uses activated amino acids in the form of aminoacyl-tRNAs (aa-tRNAs) as substrates to catalyze the ATP-independent formation of cyclodipeptides which are intermediates in diketopiperazine (DKP) biosynthetic pathways. Catalyzes the formation of cyclo(L-Leu-L-Leu) (cLL) from L-leucyl-tRNA(Leu). Can incorporate various nonpolar residues, such as L-phenylalanine, L-leucine and L-methionine, into cyclodipeptides. The protein is Cyclo(L-leucyl-L-leucyl) synthase of Photorhabdus laumondii subsp. laumondii (strain DSM 15139 / CIP 105565 / TT01) (Photorhabdus luminescens subsp. laumondii).